A 364-amino-acid chain; its full sequence is Protein LATERAL BRANCHING OXIDOREDUCTASE 1 (364 aa).

The 110-residue stretch at 203 to 312 (RFEEMFGEAV…RLTIVTFYAP (110 aa)) folds into the Fe2OG dioxygenase domain. Residues histidine 235, aspartate 237, and histidine 293 each contribute to the Fe cation site. Arginine 303 is a 2-oxoglutarate binding site.

It belongs to the iron/ascorbate-dependent oxidoreductase family. Monomer. It depends on Fe(2+) as a cofactor. Requires L-ascorbate as cofactor. Expressed in the vasculature throughout the plant and in the buds and root tips.

It localises to the cytoplasm. It catalyses the reaction (11R)-methyl carlactonoate + 2-oxoglutarate + O2 = (11R)-hydroxymethyl carlactonoate + succinate + CO2. In terms of biological role, oxoglutarate-dependent dioxygenase involved in the biosynthesis of strigolactone natural products, bioactive compounds promoting plant fitness and soil microbe interactions, but preventing shoot branching. Catalyzes the hydroxylation of (11R)-methyl carlactonoate (MeCLA) to produce (11R)-hydroxymethyl carlactonoate (1'-HO-MeCLA) in final stages of strigolactone biosynthesis, downstream of MAX1 and CLAMT. The sequence is that of Protein LATERAL BRANCHING OXIDOREDUCTASE 1 from Arabidopsis thaliana (Mouse-ear cress).